The primary structure comprises 150 residues: MRSAQSKRSQSTATGERTLHIGRDRPIRISAGHRLQHHDGKCSRPHGHNYEISVEITGQLTDEGWVVDKGTVTAVVSDWDHRFLLEDGDPLVDAFREAGDGDAVVVLEQPPTAEVMGVVLERKLHDALPETVSAVSVTVAETPALTAGPN.

A compositionally biased stretch (polar residues) spans Met1–Gly15. Residues Met1–Gly22 are disordered. Position 33 (His33) interacts with Zn(2+). The Proton acceptor role is filled by Cys42. Residues His46 and His48 each coordinate Zn(2+). Active-site charge relay system residues include His81 and Glu141.

Belongs to the PTPS family. QueD subfamily. Zn(2+) serves as cofactor.

It carries out the reaction 7,8-dihydroneopterin 3'-triphosphate + H2O = 6-carboxy-5,6,7,8-tetrahydropterin + triphosphate + acetaldehyde + 2 H(+). It participates in purine metabolism; 7-cyano-7-deazaguanine biosynthesis. In terms of biological role, catalyzes the conversion of 7,8-dihydroneopterin triphosphate (H2NTP) to 6-carboxy-5,6,7,8-tetrahydropterin (CPH4) and acetaldehyde. This is Probable 6-carboxy-5,6,7,8-tetrahydropterin synthase (queD) from Halobacterium salinarum (strain ATCC 29341 / DSM 671 / R1).